The primary structure comprises 145 residues: D-aminoacyl-tRNA deacylase (145 aa).

Residues 137 to 138 (GP) carry the Gly-cisPro motif, important for rejection of L-amino acids motif.

It belongs to the DTD family. In terms of assembly, homodimer.

The protein resides in the cytoplasm. The enzyme catalyses glycyl-tRNA(Ala) + H2O = tRNA(Ala) + glycine + H(+). It catalyses the reaction a D-aminoacyl-tRNA + H2O = a tRNA + a D-alpha-amino acid + H(+). Functionally, an aminoacyl-tRNA editing enzyme that deacylates mischarged D-aminoacyl-tRNAs. Also deacylates mischarged glycyl-tRNA(Ala), protecting cells against glycine mischarging by AlaRS. Acts via tRNA-based rather than protein-based catalysis; rejects L-amino acids rather than detecting D-amino acids in the active site. By recycling D-aminoacyl-tRNA to D-amino acids and free tRNA molecules, this enzyme counteracts the toxicity associated with the formation of D-aminoacyl-tRNA entities in vivo and helps enforce protein L-homochirality. The sequence is that of D-aminoacyl-tRNA deacylase from Pseudomonas aeruginosa (strain LESB58).